A 113-amino-acid chain; its full sequence is Dolichyl-diphosphooligosaccharide--protein glycosyltransferase subunit DAD1 (113 aa).

At serine 2 the chain carries N-acetylserine. Residues 2-30 (SASVLSVISRFLEEYLSSTPQRLKLLDAY) are Cytoplasmic-facing. Residues 31–51 (LLYILLTGALQFGYCLLVGTF) form a helical membrane-spanning segment. Proline 52 is a topological domain (lumenal). A helical transmembrane segment spans residues 53-73 (FNSFLSGFISCVGSFILAVCL). At 74 to 92 (RIQINPQNKADFQGISPER) the chain is on the cytoplasmic side. Residues 93 to 113 (AFADFLFASTILHLVVMNFVG) form a helical membrane-spanning segment.

Belongs to the DAD/OST2 family. As to quaternary structure, component of the oligosaccharyltransferase (OST) complex. OST exists in two different complex forms which contain common core subunits RPN1, RPN2, OST48, OST4, DAD1 and TMEM258, either STT3A or STT3B as catalytic subunits, and form-specific accessory subunits. STT3A complex assembly occurs through the formation of 3 subcomplexes. Subcomplex 1 contains RPN1 and TMEM258, subcomplex 2 contains the STT3A-specific subunits STT3A, DC2/OSTC, and KCP2 as well as the core subunit OST4, and subcomplex 3 contains RPN2, DAD1, and OST48. The STT3A complex can form stable complexes with the Sec61 complex or with both the Sec61 and TRAP complexes.

Its subcellular location is the endoplasmic reticulum membrane. It functions in the pathway protein modification; protein glycosylation. Subunit of the oligosaccharyl transferase (OST) complex that catalyzes the initial transfer of a defined glycan (Glc(3)Man(9)GlcNAc(2) in eukaryotes) from the lipid carrier dolichol-pyrophosphate to an asparagine residue within an Asn-X-Ser/Thr consensus motif in nascent polypeptide chains, the first step in protein N-glycosylation. N-glycosylation occurs cotranslationally and the complex associates with the Sec61 complex at the channel-forming translocon complex that mediates protein translocation across the endoplasmic reticulum (ER). All subunits are required for a maximal enzyme activity. The polypeptide is Dolichyl-diphosphooligosaccharide--protein glycosyltransferase subunit DAD1 (Sus scrofa (Pig)).